Here is a 1266-residue protein sequence, read N- to C-terminus: Formin-like protein 13 (1266 aa).

The region spanning 9-193 (YRKPPDGLLE…QYVSRRNLVS (185 aa)) is the Phosphatase tensin-type domain. The Phosphocysteine intermediate role is filled by cysteine 126. One can recognise a C2 tensin-type domain in the interval 199 to 337 (DRALTMDCVI…FRVELLFSDM (139 aa)). Disordered stretches follow at residues 497–568 (KPLV…LQHS), 597–825 (KNLI…GKGR), 881–902 (SASA…PKPE), and 1210–1266 (QLEA…RTAP). The span at 529 to 538 (PPTPSPPHPV) shows a compositional bias: pro residues. Positions 617–644 (EPSSKTTNSLLLSPQASPATPTNPSKTV) are enriched in polar residues. Composition is skewed to pro residues over residues 686–698 (LPRP…PPPM), 706–742 (VPPP…PPTP), 754–781 (PPAP…PPPL), and 806–815 (PNVPPTPALP). In terms of domain architecture, FH2 spans 829–1226 (VNLKNSPAKK…KNAAEKEKPK (398 aa)). 3 stretches are compositionally biased toward basic and acidic residues: residues 889–902 (GKSR…PKPE), 1210–1248 (QLEA…EKTK), and 1255–1266 (EMSDRLKERTAP).

It belongs to the formin-like family. Class-II subfamily.

This Arabidopsis thaliana (Mouse-ear cress) protein is Formin-like protein 13 (FH13).